A 331-amino-acid polypeptide reads, in one-letter code: Ferrochelatase (331 aa).

Residues H187 and E286 each coordinate Fe cation.

The protein belongs to the ferrochelatase family.

The protein resides in the cytoplasm. The catalysed reaction is heme b + 2 H(+) = protoporphyrin IX + Fe(2+). It participates in porphyrin-containing compound metabolism; protoheme biosynthesis; protoheme from protoporphyrin-IX: step 1/1. In terms of biological role, catalyzes the ferrous insertion into protoporphyrin IX. This Legionella pneumophila subsp. pneumophila (strain Philadelphia 1 / ATCC 33152 / DSM 7513) protein is Ferrochelatase.